Reading from the N-terminus, the 488-residue chain is UDP-N-acetylmuramate--L-alanine ligase (488 aa).

ATP is bound at residue 127 to 133 (GTHGKTT).

It belongs to the MurCDEF family.

Its subcellular location is the cytoplasm. The enzyme catalyses UDP-N-acetyl-alpha-D-muramate + L-alanine + ATP = UDP-N-acetyl-alpha-D-muramoyl-L-alanine + ADP + phosphate + H(+). Its pathway is cell wall biogenesis; peptidoglycan biosynthesis. In terms of biological role, cell wall formation. This is UDP-N-acetylmuramate--L-alanine ligase from Shewanella sp. (strain ANA-3).